A 153-amino-acid chain; its full sequence is Subtilisin propeptide-like protein (153 aa).

The signal sequence occupies residues 1–27 (MKFLFAFNFFSLYIYLYEFLCIHLCGS). Residues 127–153 (QISHLSEFIQYLLNKNVCIEFNQNVML) form a dispensable for parasite growth in host erythrocytes region.

It is found in the secreted. It localises to the parasitophorous vacuole lumen. The protein resides in the cell membrane. Its function is as follows. Acts as a specific inhibitor of subtilisin-like protease SUB1. The chain is Subtilisin propeptide-like protein from Plasmodium falciparum (isolate 3D7).